The following is a 426-amino-acid chain: Alpha/beta hydrolase pydG (426 aa).

The protein belongs to the AB hydrolase superfamily. In terms of assembly, homodimer.

It functions in the pathway mycotoxin biosynthesis. Its function is as follows. Alpha/beta hydrolasee; part of the gene cluster that mediates the biosynthesis of pyrrocidines, fungal natural products containing a macrocyclic para-cyclophane connected to a decahydrofluorene ring system that show potent antibiotic activities toward Gram-negative bacteria. Within the pathway, pydG catalyzes the Knoevenagel condensation that affords the 3-pyrrolin-2-one ring, using as substrate the polyketide-tyrosyl acyl thioester product of pydA. The pathway begins with the PKS-NRPS pydA which, with the help of the trans-enoyl reductase pydC, synthesizes the polyketide-tyrosyl acyl thioester product which can be reductively off-loaded by the terminal reductase (R) domain in pydA. The alpha/beta hydrolase pydG is then required to catalyze the subsequent Knoevenagel condensation that affords the 3-pyrrolin-2-one ring, whereas the four proteins pydB, pydE, pydX and pydZ then function synergistically to form the cyclophane. PydB and the membrane-bound pydX and pydZ are lipid-binding proteins that can sequester and mold the pdyG product into the inverse S-shape. Binding of the medium chain reductase pydE to the complex would trigger the cascade oxidative cyclization. PydY is involved in the Diels-Alder cycloaddition that forms the decahydrofluorene core. Additional non-enzymatic hydroxylation yields pyrrocidine A2 which can be further reduced into pyrrocidine B by an endogenous reductase. The polypeptide is Alpha/beta hydrolase pydG (Acremonium sp).